Reading from the N-terminus, the 465-residue chain is Ribulose bisphosphate carboxylase large chain (465 aa).

The residue at position 4 (lysine 4) is an N6,N6,N6-trimethyllysine. 2 residues coordinate substrate: asparagine 113 and threonine 163. The active-site Proton acceptor is the lysine 165. Lysine 167 serves as a coordination point for substrate. Mg(2+)-binding residues include lysine 191, aspartate 193, and glutamate 194. At lysine 191 the chain carries N6-carboxylysine. Histidine 284 serves as the catalytic Proton acceptor. Arginine 285, histidine 317, and serine 369 together coordinate substrate.

It belongs to the RuBisCO large chain family. Type I subfamily. As to quaternary structure, heterohexadecamer of 8 large chains and 8 small chains; disulfide-linked. The disulfide link is formed within the large subunit homodimers. Requires Mg(2+) as cofactor. In terms of processing, the disulfide bond which can form in the large chain dimeric partners within the hexadecamer appears to be associated with oxidative stress and protein turnover.

It localises to the plastid. The protein resides in the chloroplast. The catalysed reaction is 2 (2R)-3-phosphoglycerate + 2 H(+) = D-ribulose 1,5-bisphosphate + CO2 + H2O. The enzyme catalyses D-ribulose 1,5-bisphosphate + O2 = 2-phosphoglycolate + (2R)-3-phosphoglycerate + 2 H(+). Functionally, ruBisCO catalyzes two reactions: the carboxylation of D-ribulose 1,5-bisphosphate, the primary event in carbon dioxide fixation, as well as the oxidative fragmentation of the pentose substrate in the photorespiration process. Both reactions occur simultaneously and in competition at the same active site. The chain is Ribulose bisphosphate carboxylase large chain from Morus rubra (Red mulberry).